The sequence spans 315 residues: DNA-directed RNA polymerase subunit alpha (315 aa).

The segment at 1-229 is alpha N-terminal domain (alpha-NTD); sequence MLDSKLKAPV…EHLTYFSNPQ (229 aa). An alpha C-terminal domain (alpha-CTD) region spans residues 247–315; the sequence is EQEEELDLPL…LEKKGFTLKE (69 aa).

The protein belongs to the RNA polymerase alpha chain family. As to quaternary structure, homodimer. The RNAP catalytic core consists of 2 alpha, 1 beta, 1 beta' and 1 omega subunit. When a sigma factor is associated with the core the holoenzyme is formed, which can initiate transcription.

The enzyme catalyses RNA(n) + a ribonucleoside 5'-triphosphate = RNA(n+1) + diphosphate. Functionally, DNA-dependent RNA polymerase catalyzes the transcription of DNA into RNA using the four ribonucleoside triphosphates as substrates. This chain is DNA-directed RNA polymerase subunit alpha, found in Thermus thermophilus (strain ATCC BAA-163 / DSM 7039 / HB27).